Consider the following 184-residue polypeptide: Adenine phosphoribosyltransferase (184 aa).

It belongs to the purine/pyrimidine phosphoribosyltransferase family. Homodimer.

It is found in the cytoplasm. The catalysed reaction is AMP + diphosphate = 5-phospho-alpha-D-ribose 1-diphosphate + adenine. Its pathway is purine metabolism; AMP biosynthesis via salvage pathway; AMP from adenine: step 1/1. Its function is as follows. Catalyzes a salvage reaction resulting in the formation of AMP, that is energically less costly than de novo synthesis. The polypeptide is Adenine phosphoribosyltransferase (Shewanella baltica (strain OS223)).